A 644-amino-acid polypeptide reads, in one-letter code: Sodium/potassium/calcium exchanger 3 (644 aa).

Positions 1–44 are cleaved as a signal peptide; sequence MRPSGDEDRARRRRRRRRRRDLLLSQLCFLASVALLLWSLSSLR. At 45-107 the chain is on the extracellular side; that stretch reads EQKELDLMDL…DIFTNEDRRQ (63 aa). N-linked (GlcNAc...) asparagine glycans are attached at residues Asn71 and Asn86. A helical transmembrane segment spans residues 108–128; sequence GAVVLHVLCAIYMFYALAIVC. Residues 129–153 lie on the Cytoplasmic side of the membrane; sequence DDFFVPSLEKICERLHLSEDVAGAT. The stretch at 149–189 is one Alpha-1 repeat; sequence VAGATFMAAGSSAPELFTSVIGVFITKGDVGVGTIVGSAVF. Residues 154–174 form a helical membrane-spanning segment; it reads FMAAGSSAPELFTSVIGVFIT. At 175-182 the chain is on the extracellular side; it reads KGDVGVGT. Residues 183–203 form a helical membrane-spanning segment; it reads IVGSAVFNILCIIGVCGLFAG. At 204–210 the chain is on the cytoplasmic side; the sequence is QVVALSS. A helical transmembrane segment spans residues 211–231; that stretch reads WCLLRDSIYYTLSVIALIVFI. Topologically, residues 232–234 are extracellular; the sequence is YDE. A helical transmembrane segment spans residues 235–255; the sequence is KVSWWESLVLVLMYLIYIVIM. Topologically, residues 256 to 484 are cytoplasmic; sequence KYNACIHQCF…WFMVTFASST (229 aa). Phosphoserine is present on Ser308. Residues 405-442 are disordered; the sequence is AEAGNETENENEDNENDEEEEEDEDDDEGPYTPFDTPS. Acidic residues predominate over residues 409–433; the sequence is NETENENEDNENDEEEEEDEDDDEG. A helical transmembrane segment spans residues 485–505; that stretch reads LWIAAFSYMMVWMVTIIGYTL. The Extracellular portion of the chain corresponds to 506 to 510; sequence GIPDV. The chain crosses the membrane as a helical span at residues 511-531; the sequence is IMGITFLAAGTSVPDCMASLI. An Alpha-2 repeat occupies 518–549; the sequence is AAGTSVPDCMASLIVARQGMGDMAVSNSIGSN. The Cytoplasmic portion of the chain corresponds to 532–549; the sequence is VARQGMGDMAVSNSIGSN. Residues 550 to 570 form a helical membrane-spanning segment; the sequence is VFDILIGLGLPWALQTLAVDY. Residues 571-580 are Extracellular-facing; sequence GSYIRLNSRG. The chain crosses the membrane as a helical span at residues 581–601; sequence LIYSVGLLLASVFVTVFGVHL. The Cytoplasmic segment spans residues 602 to 615; sequence NKWQLDKKLGCGCL. A helical membrane pass occupies residues 616–636; that stretch reads LLYGVFLCFSIMTEFNVFTFV. The Extracellular segment spans residues 637–644; it reads NLPMCGDH.

This sequence belongs to the Ca(2+):cation antiporter (CaCA) (TC 2.A.19) family. SLC24A subfamily. Abundant in the brain. Expressed at low levels in the aorta, uterus and intestine.

It localises to the cell membrane. It carries out the reaction Ca(2+)(out) + K(+)(out) + 4 Na(+)(in) = Ca(2+)(in) + K(+)(in) + 4 Na(+)(out). Functionally, calcium, potassium:sodium antiporter that transports 1 Ca(2+) and 1 K(+) in exchange for 4 Na(+). The polypeptide is Sodium/potassium/calcium exchanger 3 (SLC24A3) (Homo sapiens (Human)).